Reading from the N-terminus, the 70-residue chain is Small ribosomal subunit protein bS21 (70 aa).

The tract at residues 39–70 (EKPTTERKRKKAAAVSRTRKRLRSQMLPKKLY) is disordered. Basic residues predominate over residues 45–61 (RKRKKAAAVSRTRKRLR).

Belongs to the bacterial ribosomal protein bS21 family.

In Ralstonia nicotianae (strain ATCC BAA-1114 / GMI1000) (Ralstonia solanacearum), this protein is Small ribosomal subunit protein bS21.